Here is an 860-residue protein sequence, read N- to C-terminus: Leucine--tRNA ligase (860 aa).

Positions 42-52 (PYPSGRLHMGH) match the 'HIGH' region motif. The short motif at 619-623 (KMSKS) is the 'KMSKS' region element. K622 is a binding site for ATP.

Belongs to the class-I aminoacyl-tRNA synthetase family.

It is found in the cytoplasm. The enzyme catalyses tRNA(Leu) + L-leucine + ATP = L-leucyl-tRNA(Leu) + AMP + diphosphate. The protein is Leucine--tRNA ligase of Erwinia tasmaniensis (strain DSM 17950 / CFBP 7177 / CIP 109463 / NCPPB 4357 / Et1/99).